The following is a 525-amino-acid chain: Phosphatidylinositol 4-kinase alpha 2 (525 aa).

Positions Ser163–Val278 are pleckstrin homology (PH) domain conferring phosphoinositide binding specificity. Residues Val239 to Thr509 enclose the PI3K/PI4K catalytic domain. The tract at residues Leu245–Val251 is G-loop. The segment at Gln373 to Asn381 is catalytic loop. Residues His392 to Ser417 are activation loop.

The protein belongs to the PI3/PI4-kinase family. Type III PI4K subfamily.

Its subcellular location is the membrane. It catalyses the reaction a 1,2-diacyl-sn-glycero-3-phospho-(1D-myo-inositol) + ATP = a 1,2-diacyl-sn-glycero-3-phospho-(1D-myo-inositol 4-phosphate) + ADP + H(+). Acts on phosphatidylinositol (PtdIns) in the first committed step in the production of the second messenger inositol-1,4,5,-trisphosphate. This chain is Phosphatidylinositol 4-kinase alpha 2 (PI4KA2), found in Arabidopsis thaliana (Mouse-ear cress).